The chain runs to 127 residues: RxLR effector protein SFI3 (127 aa).

Residues 1 to 20 (MRFLLVAVVAMMALVSSSTA) form the signal peptide. A RxLR-dEER motif is present at residues 40-62 (RSLRNTEERSIAAILAEAGEEDR). The WY-domain stretch occupies residues 72 to 107 (WYKAKLTPTQVKTVLGVSQAEMNNVAKQLQRLYLGY).

The protein belongs to the RxLR effector family. Forms an unusual trans-homodimer. Interacts with host UBK.

It localises to the secreted. The protein resides in the host nucleus. Its subcellular location is the host nucleolus. Functionally, effector that suppresses flg22-induced post-translational MAP kinase activation in potato and tomato, but not in Arabidopsis. The perception of highly conserved pathogen- or microbe-associated molecular patterns (PAMPs/MAMPs), such as flg22, triggers converging signaling pathways recruiting MAP kinase cascades and inducing transcriptional re-programming, yielding a generic antimicrobial response. Does not suppress programmed cell death triggered by the P.infestans elicitin infestin-1 (INF1), or by co-expression of tomato Cf4 with Cladosporium fulvum Avr4. Suppresses early pattern-triggered immunity (PTI) via interaction with the U-box-kinase protein UBK, a positive regulator of specific PTI pathways in both potato and Nicotiana benthamiana. The polypeptide is RxLR effector protein SFI3 (Phytophthora infestans (strain T30-4) (Potato late blight agent)).